Here is a 333-residue protein sequence, read N- to C-terminus: Holliday junction branch migration complex subunit RuvB (333 aa).

Residues 1 to 182 (MDERLLSGES…FGVLSRLEYY (182 aa)) form a large ATPase domain (RuvB-L) region. Residues Leu21, Arg22, Gly63, Lys66, Thr67, Thr68, 129–131 (EDF), Arg172, Tyr182, and Arg219 contribute to the ATP site. Mg(2+) is bound at residue Thr67. The small ATPAse domain (RuvB-S) stretch occupies residues 183-253 (TVDQLSEIVE…ITQMALELLQ (71 aa)). The tract at residues 256–333 (KLGLDHIDHK…EHFGMEMPKV (78 aa)) is head domain (RuvB-H). DNA is bound by residues Arg311 and Arg316.

Belongs to the RuvB family. As to quaternary structure, homohexamer. Forms an RuvA(8)-RuvB(12)-Holliday junction (HJ) complex. HJ DNA is sandwiched between 2 RuvA tetramers; dsDNA enters through RuvA and exits via RuvB. An RuvB hexamer assembles on each DNA strand where it exits the tetramer. Each RuvB hexamer is contacted by two RuvA subunits (via domain III) on 2 adjacent RuvB subunits; this complex drives branch migration. In the full resolvosome a probable DNA-RuvA(4)-RuvB(12)-RuvC(2) complex forms which resolves the HJ.

The protein resides in the cytoplasm. It catalyses the reaction ATP + H2O = ADP + phosphate + H(+). Its function is as follows. The RuvA-RuvB-RuvC complex processes Holliday junction (HJ) DNA during genetic recombination and DNA repair, while the RuvA-RuvB complex plays an important role in the rescue of blocked DNA replication forks via replication fork reversal (RFR). RuvA specifically binds to HJ cruciform DNA, conferring on it an open structure. The RuvB hexamer acts as an ATP-dependent pump, pulling dsDNA into and through the RuvAB complex. RuvB forms 2 homohexamers on either side of HJ DNA bound by 1 or 2 RuvA tetramers; 4 subunits per hexamer contact DNA at a time. Coordinated motions by a converter formed by DNA-disengaged RuvB subunits stimulates ATP hydrolysis and nucleotide exchange. Immobilization of the converter enables RuvB to convert the ATP-contained energy into a lever motion, pulling 2 nucleotides of DNA out of the RuvA tetramer per ATP hydrolyzed, thus driving DNA branch migration. The RuvB motors rotate together with the DNA substrate, which together with the progressing nucleotide cycle form the mechanistic basis for DNA recombination by continuous HJ branch migration. Branch migration allows RuvC to scan DNA until it finds its consensus sequence, where it cleaves and resolves cruciform DNA. This chain is Holliday junction branch migration complex subunit RuvB, found in Bacillus cereus (strain ATCC 10987 / NRS 248).